The following is a 431-amino-acid chain: tRNA(Ile)-lysidine synthase (431 aa).

Residue 26 to 31 coordinates ATP; it reads SGGIDS.

It belongs to the tRNA(Ile)-lysidine synthase family.

The protein resides in the cytoplasm. It carries out the reaction cytidine(34) in tRNA(Ile2) + L-lysine + ATP = lysidine(34) in tRNA(Ile2) + AMP + diphosphate + H(+). In terms of biological role, ligates lysine onto the cytidine present at position 34 of the AUA codon-specific tRNA(Ile) that contains the anticodon CAU, in an ATP-dependent manner. Cytidine is converted to lysidine, thus changing the amino acid specificity of the tRNA from methionine to isoleucine. This Wolbachia sp. subsp. Brugia malayi (strain TRS) protein is tRNA(Ile)-lysidine synthase.